A 326-amino-acid chain; its full sequence is Meso-diaminopimelate D-dehydrogenase (326 aa).

NADP(+)-binding positions include 11–14 (YGNL), 35–37 (TRR), 69–72 (CGGS), 92–94 (SFD), and 121–125 (VGWDP). Substrate contacts are provided by residues D94, D124, W148, 154-155 (QG), T173, R199, H249, and N276.

The protein belongs to the diaminopimelate dehydrogenase family. In terms of assembly, homodimer.

It carries out the reaction meso-2,6-diaminopimelate + NADP(+) + H2O = (S)-2-amino-6-oxoheptanedioate + NH4(+) + NADPH + H(+). The protein operates within amino-acid biosynthesis; L-lysine biosynthesis via DAP pathway; DL-2,6-diaminopimelate from (S)-tetrahydrodipicolinate: step 1/1. L,L-2,6-diaminopimelate, D,D-2,6-diaminopimelate and meso-2,5-diaminoadipate competitively inhibit the oxidation of meso-2,6-diaminopimelate. L-2-amino-6-methylene-pimelate is also a potent competitive inhibitor (5 uM) of this reaction. Glyoxylate inhibits the reductive amination of L-2-amino-6-oxopimelate about 30%. The enzyme is inhibited completely by p-chloromercuribenzoate and HgCl(2) in vitro. Functionally, catalyzes the reversible NADPH-dependent reductive amination of L-2-amino-6-oxopimelate, the acyclic form of L-tetrahydrodipicolinate, to generate the meso compound, D,L-2,6-diaminopimelate. Probably plays a role in lysine biosynthesis. Exhibits a high substrate specificity, since alpha-ketoglutarate, pyruvate, oxaloacetate, glyoxylate, alpha-ketobutyrate, alpha-ketovalerate, alpha-ketocaproate, alpha-ketoisocaproate, alpha-ketoisovalerate, and phenylpyruvate are not substrates for the reductive amination reaction, and L,L-2,6-diaminopimelate, D,D-2,6-diaminopimelate, DL-alpha-aminopimelate, meso- and DL-2,5-diaminoadipate, L-djenkolate, L-cystine, L-lysine, S-(beta-aminoethy1)-L-homocysteine, L-ornithine, L-arginine, L-alpha,gamma-diaminobutyrate, L-histidine, L-phenylalanine, L-tyrosine, L-glutamate, L-aspartate, L-leucine, L-valine, L-methionine, L-serine, L-alanine, L-alpha-aminobutyrate, D-lysine, D-glutamate, D-leucine, D-alanine, D-phenylalanine, epsilon-aminocaproate, 7-aminoheptanoate, and 8-aminooctanoate are not substrates for the oxidative deamination reaction. Cannot use NAD(+) or NAD(+) analogs instead of NADP(+) for the oxidative deamination reaction. The polypeptide is Meso-diaminopimelate D-dehydrogenase (dapdh) (Lysinibacillus sphaericus (Bacillus sphaericus)).